Here is a 368-residue protein sequence, read N- to C-terminus: Isopentenyl-diphosphate delta-isomerase (368 aa).

7–8 lines the substrate pocket; that stretch reads RK. FMN-binding positions include Thr65, 66–68, Ser96, and Asn125; that span reads GMT. Position 96–98 (96–98) interacts with substrate; sequence SQR. Substrate is bound at residue Gln160. Glu161 serves as a coordination point for Mg(2+). FMN-binding positions include Lys193, Ser218, Thr223, 275-277, and 296-297; these read GIR and AL.

This sequence belongs to the IPP isomerase type 2 family. In terms of assembly, homooctamer. Dimer of tetramers. Requires FMN as cofactor. NADPH serves as cofactor. It depends on Mg(2+) as a cofactor.

It localises to the cytoplasm. It catalyses the reaction isopentenyl diphosphate = dimethylallyl diphosphate. Involved in the biosynthesis of isoprenoids. Catalyzes the 1,3-allylic rearrangement of the homoallylic substrate isopentenyl (IPP) to its allylic isomer, dimethylallyl diphosphate (DMAPP). The sequence is that of Isopentenyl-diphosphate delta-isomerase from Saccharolobus islandicus (strain M.16.27) (Sulfolobus islandicus).